Reading from the N-terminus, the 805-residue chain is Pentatricopeptide repeat-containing protein At4g01570 (805 aa).

PPR repeat units lie at residues 91–125 (SATA…GVNL), 126–160 (DQTM…GDCL), 161–196 (NPSV…DNHS), 211–241 (GTVA…LKGM), 247–277 (DTWS…MKER), 288–322 (DICT…GHEP), 323–357 (DNST…GFVP), 358–392 (DTIV…GVRA), 393–427 (SCWT…GQFV), 428–462 (DAIT…GFSV), 463–497 (DLVT…NLVP), 593–627 (DVDM…GVTD), 629–663 (TSYT…FCAA), 664–698 (DIAT…GGYL), 699–733 (DIVM…GINP), and 734–768 (DVVS…GCLP).

It belongs to the PPR family. P subfamily.

The polypeptide is Pentatricopeptide repeat-containing protein At4g01570 (Arabidopsis thaliana (Mouse-ear cress)).